The following is a 389-amino-acid chain: Chalcone synthase 4 (389 aa).

Residue C164 is part of the active site.

Belongs to the thiolase-like superfamily. Chalcone/stilbene synthases family.

It carries out the reaction (E)-4-coumaroyl-CoA + 3 malonyl-CoA + 3 H(+) = 2',4,4',6'-tetrahydroxychalcone + 3 CO2 + 4 CoA. It functions in the pathway secondary metabolite biosynthesis; flavonoid biosynthesis. The primary product of this enzyme is 4,2',4',6'-tetrahydroxychalcone (also termed naringenin-chalcone or chalcone) which can under specific conditions spontaneously isomerize into naringenin. This Medicago sativa (Alfalfa) protein is Chalcone synthase 4 (CHS4).